The chain runs to 135 residues: Holo-[acyl-carrier-protein] synthase (135 aa).

Residues aspartate 8 and glutamate 58 each coordinate Mg(2+).

Belongs to the P-Pant transferase superfamily. AcpS family. The cofactor is Mg(2+).

The protein resides in the cytoplasm. It catalyses the reaction apo-[ACP] + CoA = holo-[ACP] + adenosine 3',5'-bisphosphate + H(+). Transfers the 4'-phosphopantetheine moiety from coenzyme A to a Ser of acyl-carrier-protein. In Leuconostoc citreum (strain KM20), this protein is Holo-[acyl-carrier-protein] synthase.